We begin with the raw amino-acid sequence, 887 residues long: Leucine--tRNA ligase (887 aa).

The short motif at 48–58 (PYPSGKLHMGH) is the 'HIGH' region element. A 'KMSKS' region motif is present at residues 644 to 648 (TMSKS). Lys647 is a binding site for ATP.

The protein belongs to the class-I aminoacyl-tRNA synthetase family.

The protein resides in the cytoplasm. The enzyme catalyses tRNA(Leu) + L-leucine + ATP = L-leucyl-tRNA(Leu) + AMP + diphosphate. This is Leucine--tRNA ligase from Leptothrix cholodnii (strain ATCC 51168 / LMG 8142 / SP-6) (Leptothrix discophora (strain SP-6)).